Here is a 241-residue protein sequence, read N- to C-terminus: Ribonuclease HII (241 aa).

Residues 27-227 (GPVAGVDEAG…REARSLRLED (201 aa)) enclose the RNase H type-2 domain. Residues Asp-33, Glu-34, and Asp-128 each coordinate a divalent metal cation.

The protein belongs to the RNase HII family. Mn(2+) is required as a cofactor. It depends on Mg(2+) as a cofactor.

Its subcellular location is the cytoplasm. The enzyme catalyses Endonucleolytic cleavage to 5'-phosphomonoester.. In terms of biological role, endonuclease that specifically degrades the RNA of RNA-DNA hybrids. This chain is Ribonuclease HII, found in Frankia alni (strain DSM 45986 / CECT 9034 / ACN14a).